Reading from the N-terminus, the 255-residue chain is Geranylgeranylglyceryl phosphate synthase (255 aa).

2 residues coordinate Mg(2+): Asp-34 and Thr-64. Residues 182–188, 213–214, and 235–236 contribute to the sn-glycerol 1-phosphate site; these read YLEAGSG, GG, and GN.

This sequence belongs to the GGGP/HepGP synthase family. Group II subfamily. Requires Mg(2+) as cofactor.

It localises to the cytoplasm. It carries out the reaction sn-glycerol 1-phosphate + (2E,6E,10E)-geranylgeranyl diphosphate = sn-3-O-(geranylgeranyl)glycerol 1-phosphate + diphosphate. The protein operates within membrane lipid metabolism; glycerophospholipid metabolism. Functionally, prenyltransferase that catalyzes the transfer of the geranylgeranyl moiety of geranylgeranyl diphosphate (GGPP) to the C3 hydroxyl of sn-glycerol-1-phosphate (G1P). This reaction is the first ether-bond-formation step in the biosynthesis of archaeal membrane lipids. This is Geranylgeranylglyceryl phosphate synthase from Saccharolobus solfataricus (strain ATCC 35092 / DSM 1617 / JCM 11322 / P2) (Sulfolobus solfataricus).